A 259-amino-acid polypeptide reads, in one-letter code: Probable kinetochore protein spc25 (259 aa).

Positions 1–20 (MSRKSVMSSTFEPSLSTSRQ) are enriched in polar residues. Residues 1–25 (MSRKSVMSSTFEPSLSTSRQPLGPS) form a disordered region. A coiled-coil region spans residues 59-162 (RKRVLEERNQ…HAAQLEAQAR (104 aa)).

Belongs to the SPC25 family. In terms of assembly, component of the NDC80 complex, which consists of kpr-1/ndc80, kpr-2/nuf2, kpr-3/spc24 and kpr-4/spc25.

The protein localises to the nucleus. The protein resides in the chromosome. Its subcellular location is the centromere. It is found in the kinetochore. In terms of biological role, acts as a component of the essential kinetochore-associated NDC80 complex, which is required for chromosome segregation and spindle checkpoint activity. The polypeptide is Probable kinetochore protein spc25 (kpr-4) (Neurospora crassa (strain ATCC 24698 / 74-OR23-1A / CBS 708.71 / DSM 1257 / FGSC 987)).